We begin with the raw amino-acid sequence, 161 residues long: Protein PLASTID TRANSCRIPTIONALLY ACTIVE 7 (161 aa).

A chloroplast-targeting transit peptide spans 1–32; that stretch reads MASFTCSSPSSILPIIDTRSGNLRCTFQSQVS.

In terms of assembly, component of the transcriptionally active chromosome (TAC) complexes. Interacts with FLN1, PTAC10, PTAC12/HMR/PAP5 and PTAC14. Binds to SL1/MTERF3. In terms of tissue distribution, mostly expressed in leaves, flowers and seedlings, and, to a lower extent, in roots and stems.

The protein localises to the plastid. It localises to the chloroplast. Essential for chloroplast development, especially for thylakoid formation. Involved in plastid gene expression, probably by maintaining plastid-encoded RNA polymerase (PEP) activity. The protein is Protein PLASTID TRANSCRIPTIONALLY ACTIVE 7 of Arabidopsis thaliana (Mouse-ear cress).